The chain runs to 452 residues: Friend leukemia integration 1 transcription factor (452 aa).

Ser39 carries the post-translational modification Phosphoserine. The PNT domain maps to 112 to 198 (PPPPNMTTNE…SHLTYLRESS (87 aa)). The segment covering 202-214 (YNTTSHTDPSSRL) has biased composition (polar residues). Residues 202 to 272 (YNTTSHTDPS…YQILGPTSSR (71 aa)) form a disordered region. Residues 215–226 (NVKEDPSYDSVR) show a composition bias toward basic and acidic residues. Over residues 248-257 (QTMSKNTEQR) the composition is skewed to polar residues. The segment at residues 281–361 (IQLWQFLLEL…HGKRYAYKFD (81 aa)) is a DNA-binding region (ETS).

Belongs to the ETS family. In terms of assembly, can form homodimers or heterodimers with ETV6/TEL1.

The protein resides in the nucleus. Its function is as follows. Sequence-specific transcriptional activator. Recognizes the DNA sequence 5'-C[CA]GGAAGT-3'. In Bos taurus (Bovine), this protein is Friend leukemia integration 1 transcription factor (FLI1).